The primary structure comprises 254 residues: UPF0246 protein CPR_2119 (254 aa).

This sequence belongs to the UPF0246 family.

The chain is UPF0246 protein CPR_2119 from Clostridium perfringens (strain SM101 / Type A).